The primary structure comprises 348 residues: Holliday junction branch migration complex subunit RuvB (348 aa).

The segment at 1–183 (MAPQPRRLIA…FGIPIRLEYY (183 aa)) is large ATPase domain (RuvB-L). Residues leucine 22, arginine 23, glycine 64, lysine 67, threonine 68, threonine 69, 130–132 (EDF), arginine 173, tyrosine 183, and arginine 220 contribute to the ATP site. Residue threonine 68 coordinates Mg(2+). Positions 184 to 254 (TVEELECIVR…VADRALRLLD (71 aa)) are small ATPAse domain (RuvB-S). The interval 257-348 (HIGLDQMDRR…FQLFSEGGEE (92 aa)) is head domain (RuvB-H). The DNA site is built by arginine 293, arginine 312, and arginine 317.

Belongs to the RuvB family. In terms of assembly, homohexamer. Forms an RuvA(8)-RuvB(12)-Holliday junction (HJ) complex. HJ DNA is sandwiched between 2 RuvA tetramers; dsDNA enters through RuvA and exits via RuvB. An RuvB hexamer assembles on each DNA strand where it exits the tetramer. Each RuvB hexamer is contacted by two RuvA subunits (via domain III) on 2 adjacent RuvB subunits; this complex drives branch migration. In the full resolvosome a probable DNA-RuvA(4)-RuvB(12)-RuvC(2) complex forms which resolves the HJ.

The protein localises to the cytoplasm. The catalysed reaction is ATP + H2O = ADP + phosphate + H(+). The RuvA-RuvB-RuvC complex processes Holliday junction (HJ) DNA during genetic recombination and DNA repair, while the RuvA-RuvB complex plays an important role in the rescue of blocked DNA replication forks via replication fork reversal (RFR). RuvA specifically binds to HJ cruciform DNA, conferring on it an open structure. The RuvB hexamer acts as an ATP-dependent pump, pulling dsDNA into and through the RuvAB complex. RuvB forms 2 homohexamers on either side of HJ DNA bound by 1 or 2 RuvA tetramers; 4 subunits per hexamer contact DNA at a time. Coordinated motions by a converter formed by DNA-disengaged RuvB subunits stimulates ATP hydrolysis and nucleotide exchange. Immobilization of the converter enables RuvB to convert the ATP-contained energy into a lever motion, pulling 2 nucleotides of DNA out of the RuvA tetramer per ATP hydrolyzed, thus driving DNA branch migration. The RuvB motors rotate together with the DNA substrate, which together with the progressing nucleotide cycle form the mechanistic basis for DNA recombination by continuous HJ branch migration. Branch migration allows RuvC to scan DNA until it finds its consensus sequence, where it cleaves and resolves cruciform DNA. The chain is Holliday junction branch migration complex subunit RuvB from Methylocella silvestris (strain DSM 15510 / CIP 108128 / LMG 27833 / NCIMB 13906 / BL2).